Reading from the N-terminus, the 396-residue chain is Ribosomal RNA large subunit methyltransferase I (396 aa).

One can recognise a PUA domain in the interval 2-81; it reads SVRLVLAKGR…ESIDIAFFSR (80 aa).

It belongs to the methyltransferase superfamily. RlmI family.

The protein localises to the cytoplasm. It catalyses the reaction cytidine(1962) in 23S rRNA + S-adenosyl-L-methionine = 5-methylcytidine(1962) in 23S rRNA + S-adenosyl-L-homocysteine + H(+). Specifically methylates the cytosine at position 1962 (m5C1962) of 23S rRNA. The polypeptide is Ribosomal RNA large subunit methyltransferase I (Shigella boydii serotype 4 (strain Sb227)).